The primary structure comprises 949 residues: Multimerin-2 (949 aa).

The first 22 residues, 1–22, serve as a signal peptide directing secretion; the sequence is MILSLLFSLGGPLGWGLLGAWA. Residues 54-132 form the EMI domain; it reads GRNWCPYPMS…PGYTGPNCEH (79 aa). 3 disulfide bridges follow: Cys-58-Cys-122, Cys-85-Cys-92, and Cys-121-Cys-130. An O-linked (Fuc...) serine glycan is attached at Ser-63. Thr-67 carries an O-linked (Fuc) threonine glycan. O-linked (Fuc) threonine glycosylation occurs at Thr-115. The interval 133-157 is disordered; the sequence is HDSMAIPEPADPGDSHQEPQDGPVS. The stretch at 167 to 187 forms a coiled coil; sequence INEVEVQQEQQEHLLGDLQND. 8 N-linked (GlcNAc...) asparagine glycosylation sites follow: Asn-205, Asn-214, Asn-249, Asn-261, Asn-350, Asn-379, Asn-439, and Asn-472. 3 coiled-coil regions span residues 292-487, 547-596, and 688-711; these read KFEA…DLIK, VDAH…HSAF, and EAAT…VKNV. N-linked (GlcNAc...) asparagine glycans are attached at residues Asn-727 and Asn-765. The disordered stretch occupies residues 779 to 801; it reads RKGKKQQKDLEAPRKRDKKEAEP. Residues 784 to 800 show a composition bias toward basic and acidic residues; it reads QQKDLEAPRKRDKKEAE. One can recognise a C1q domain in the interval 821–949; sequence EAGSPVAFYA…AFGGFLMFKT (129 aa). Asn-845 carries N-linked (GlcNAc...) asparagine glycosylation.

Heteromer of p110, p125, p140 and p200 subunits; disulfide-linked. Interacts with VEGFA. Interacts with CD93; this interaction promotes angiogenesis. Interacts with CD248. In terms of processing, N- and O-glycosylated. Post-translationally, O-fucosylated within the EMI domain (at Ser-63, Thr-67 and Thr-115) by FUT10/POFUT3 and FUT11/POFUT4. Processed by matrix metalloproteinases (MMPs) including MMP9 and, to a lesser degree, by MMP2 upon angiogenic stimulation. In terms of tissue distribution, endothelium.

The protein localises to the secreted. The protein resides in the extracellular space. Its subcellular location is the extracellular matrix. Functionally, extracellular matrix protein that plays significant roles in the vascular system and is required for the maintenance and stability of blood vessel. Affects several essential steps in angiogenesis including endothelial cell proliferation, migration, and tube formation. Positively regulates angiogenesis by acting as a ligand for CD93 receptor. The sequence is that of Multimerin-2 (MMRN2) from Homo sapiens (Human).